Here is an 849-residue protein sequence, read N- to C-terminus: A-kinase anchor protein 4 (849 aa).

The propeptide occupies 1 to 188 (MIAYCGTTTM…MAASKNTNNN (188 aa)). A phosphoserine mark is found at serine 96, serine 130, serine 190, and serine 204. Over residues 183–205 (KNTNNNQSPSNPATKSPSNQRSV) the composition is skewed to polar residues. A disordered region spans residues 183 to 210 (KNTNNNQSPSNPATKSPSNQRSVATPEG). Threonine 207 is subject to Phosphothreonine. Phosphoserine is present on residues serine 213, serine 226, and serine 271. Residues 219 to 232 (FYVNRLSSLVIQMA) form a PKA-RI and PKA-RII subunit binding domain region. Tyrosine 301 is modified (phosphotyrosine). Residues serine 302, serine 341, serine 431, serine 442, serine 444, serine 463, serine 492, serine 497, and serine 504 each carry the phosphoserine modification. A PKA-RI-alpha subunit binding domain region spans residues 335–344 (YANQVASDMM). Position 506 is a phosphothreonine (threonine 506). Serine 538 carries the phosphoserine modification. Position 583 is a phosphoserine; by STK33 (serine 583). Residues serine 628, serine 633, serine 652, and serine 702 each carry the phosphoserine modification.

It belongs to the AKAP110 family. As to quaternary structure, interacts with PRKAR1A and PRKAR2A. Interacts with ENO4. Interacts with QRICH2. Post-translationally, phosphorylated by STK33 during sperm flagella assembly. Expressed in the fibrous sheath of spermatozoa (at protein level). Expressed in step 1 to step 6 spermatids, abundance then increases during steps 8 to 12, abundance decreases thereafter.

It is found in the cell projection. It localises to the cilium. Its subcellular location is the flagellum. Major structural component of sperm fibrous sheath. Plays a role in sperm motility. The polypeptide is A-kinase anchor protein 4 (Mus musculus (Mouse)).